The following is a 547-amino-acid chain: MTALTDTPTWQTLASLAEDVKQQHMRDWFASDTSRASKYQQTACGIELDFSKNLITDDVLKALFALADESQVSQKRDAMFKGDIINHTEKRAVLHTALRNFSGEPVYVDGQDVMPEVLACQDKIKDFVASIHSGERKGYTGKALKQIVSIGIGGSFLGPKIMSEALKPYWFDGVKVHFVANVDGCHIQDVLANLDHEETLVVMSSKSFTTQETLQNTLTAKDWFLNAGGTQQDIAKHFIAVSSNIKAATDFGMAEDNIFPMWDWVGGRYSLWSAIGLPIALTLGYDNYRQLLQGAFEMDEHFKTAPAEQNLPMLTALLGVWYINFFGAQSHVLLPYYHYLRGFPAYVQQLDMESNGKNISGDTTAVDYATGPIIWGSEGTNGQHSFHQLIHQGTLLIPADFMLPLNVPNQDNTHHAMLASNCFGQTQALMQGKTFDECYADLEGKGLDEAERVKLATHKTMPGNKPSNTLLFEQMDPKTLGSLVAMYEHKVFVQGAIWGVNSFDQWGVELGKELGNQVLDKIVNTDAALGFDSSTNALIARFRQANS.

Glu-353 (proton donor) is an active-site residue. Active-site residues include His-384 and Lys-512.

It belongs to the GPI family.

It is found in the cytoplasm. It carries out the reaction alpha-D-glucose 6-phosphate = beta-D-fructose 6-phosphate. The protein operates within carbohydrate biosynthesis; gluconeogenesis. Its pathway is carbohydrate degradation; glycolysis; D-glyceraldehyde 3-phosphate and glycerone phosphate from D-glucose: step 2/4. Catalyzes the reversible isomerization of glucose-6-phosphate to fructose-6-phosphate. The chain is Glucose-6-phosphate isomerase from Pseudoalteromonas atlantica (strain T6c / ATCC BAA-1087).